A 132-amino-acid polypeptide reads, in one-letter code: Gonadotropin subunit beta-1 (132 aa).

Positions 1-17 are cleaved as a signal peptide; sequence MMRGVTMVLLLPMLVWA. Intrachain disulfides connect cysteine 25/cysteine 73, cysteine 39/cysteine 88, cysteine 50/cysteine 104, cysteine 54/cysteine 106, and cysteine 109/cysteine 116. N-linked (GlcNAc...) asparagine glycans are attached at residues asparagine 29 and asparagine 46.

It belongs to the glycoprotein hormones subunit beta family. As to quaternary structure, heterodimer of an alpha and a beta chain.

The protein resides in the secreted. Functionally, involved in gametogenesis and steroidogenesis. The sequence is that of Gonadotropin subunit beta-1 (cgba) from Ictalurus punctatus (Channel catfish).